Here is a 63-residue protein sequence, read N- to C-terminus: Cytochrome c oxidase subunit 7C, mitochondrial (63 aa).

The N-terminal 16 residues, 1–16 (MLGHSIRRFTTSVVRR), are a transit peptide targeting the mitochondrion. The Mitochondrial matrix portion of the chain corresponds to 17 to 33 (SHYEEGPGKNLPFSVKN). Position 25 is an N6-acetyllysine; alternate (lysine 25). Lysine 25 carries the post-translational modification N6-succinyllysine; alternate. A helical membrane pass occupies residues 34–60 (KWALLVKMSLYFGSAFATPFLIVRHQL). The Mitochondrial intermembrane segment spans residues 61–63 (LKQ).

It belongs to the cytochrome c oxidase VIIc family. As to quaternary structure, component of the cytochrome c oxidase (complex IV, CIV), a multisubunit enzyme composed of 14 subunits. The complex is composed of a catalytic core of 3 subunits MT-CO1, MT-CO2 and MT-CO3, encoded in the mitochondrial DNA, and 11 supernumerary subunits COX4I, COX5A, COX5B, COX6A, COX6B, COX6C, COX7A, COX7B, COX7C, COX8 and NDUFA4, which are encoded in the nuclear genome. The complex exists as a monomer or a dimer and forms supercomplexes (SCs) in the inner mitochondrial membrane with NADH-ubiquinone oxidoreductase (complex I, CI) and ubiquinol-cytochrome c oxidoreductase (cytochrome b-c1 complex, complex III, CIII), resulting in different assemblies (supercomplex SCI(1)III(2)IV(1) and megacomplex MCI(2)III(2)IV(2)). Interacts with RAB5IF.

It is found in the mitochondrion inner membrane. Its pathway is energy metabolism; oxidative phosphorylation. Its function is as follows. Component of the cytochrome c oxidase, the last enzyme in the mitochondrial electron transport chain which drives oxidative phosphorylation. The respiratory chain contains 3 multisubunit complexes succinate dehydrogenase (complex II, CII), ubiquinol-cytochrome c oxidoreductase (cytochrome b-c1 complex, complex III, CIII) and cytochrome c oxidase (complex IV, CIV), that cooperate to transfer electrons derived from NADH and succinate to molecular oxygen, creating an electrochemical gradient over the inner membrane that drives transmembrane transport and the ATP synthase. Cytochrome c oxidase is the component of the respiratory chain that catalyzes the reduction of oxygen to water. Electrons originating from reduced cytochrome c in the intermembrane space (IMS) are transferred via the dinuclear copper A center (CU(A)) of subunit 2 and heme A of subunit 1 to the active site in subunit 1, a binuclear center (BNC) formed by heme A3 and copper B (CU(B)). The BNC reduces molecular oxygen to 2 water molecules using 4 electrons from cytochrome c in the IMS and 4 protons from the mitochondrial matrix. The protein is Cytochrome c oxidase subunit 7C, mitochondrial (COX7C) of Papio hamadryas (Hamadryas baboon).